The sequence spans 869 residues: Dimethylglycine dehydrogenase, mitochondrial (869 aa).

The N-terminal 43 residues, 1-43 (MLRPGALRLRGLALRGSPRRPSSAGLREGQESPASPPEWKDRA), are a transit peptide targeting the mitochondrion. The disordered stretch occupies residues 14-39 (LRGSPRRPSSAGLREGQESPASPPEW). Residues 52 to 53 (CV), 73 to 74 (EK), and 80 to 88 (GSTWHAAGL) each bind FAD. At histidine 84 the chain carries Tele-8alpha-FAD histidine. N6-acetyllysine is present on lysine 107. Lysine 141 is modified (N6-acetyllysine; alternate). Lysine 141 bears the N6-succinyllysine; alternate mark. Lysine 161 is subject to N6-acetyllysine. Valine 212 lines the FAD pocket. An N6-acetyllysine modification is found at lysine 216. Residue tryptophan 244 coordinates FAD. 2 positions are modified to N6-succinyllysine: lysine 310 and lysine 312. Lysine 328 and lysine 353 each carry N6-acetyllysine. FAD is bound at residue 390–395 (FGYGII). Residues lysine 427, lysine 469, and lysine 516 each carry the N6-acetyllysine; alternate modification. N6-succinyllysine; alternate is present on residues lysine 427, lysine 469, and lysine 516. 573-575 (ELT) is a (6S)-5,6,7,8-tetrahydrofolate binding site. N6-acetyllysine; alternate is present on lysine 648. The residue at position 648 (lysine 648) is an N6-succinyllysine; alternate. Residues tyrosine 669, 676–678 (ELY), and tyrosine 737 each bind (6S)-5,6,7,8-tetrahydrofolate. Residue lysine 757 is modified to N6-acetyllysine. At lysine 786 the chain carries N6-acetyllysine; alternate. At lysine 786 the chain carries N6-succinyllysine; alternate. The residue at position 788 (lysine 788) is an N6-succinyllysine.

The protein belongs to the GcvT family. FAD serves as cofactor.

The protein resides in the mitochondrion. It carries out the reaction (6S)-5,6,7,8-tetrahydrofolyl-(gamma-L-Glu)(n) + N,N-dimethylglycine + oxidized [electron-transfer flavoprotein] + H(+) = (6R)-5,10-methylenetetrahydrofolyl-(gamma-L-Glu)(n) + sarcosine + reduced [electron-transfer flavoprotein]. Its pathway is amine and polyamine degradation; betaine degradation; sarcosine from betaine: step 2/2. In terms of biological role, catalyzes the demethylation of N,N-dimethylglycine to sarcosine. Also has activity with sarcosine in vitro. This Mus musculus (Mouse) protein is Dimethylglycine dehydrogenase, mitochondrial (Dmgdh).